The primary structure comprises 273 residues: 4-hydroxy-tetrahydrodipicolinate reductase (273 aa).

NAD(+) is bound by residues 12–17 and glutamate 38; that span reads GAGGRM. Arginine 39 contributes to the NADP(+) binding site. NAD(+) contacts are provided by residues 102–104 and 126–129; these read GTT and AANF. Histidine 159 (proton donor/acceptor) is an active-site residue. Residue histidine 160 coordinates (S)-2,3,4,5-tetrahydrodipicolinate. Lysine 163 (proton donor) is an active-site residue. 169–170 is a (S)-2,3,4,5-tetrahydrodipicolinate binding site; it reads GT.

The protein belongs to the DapB family. As to quaternary structure, homotetramer.

The protein resides in the cytoplasm. It carries out the reaction (S)-2,3,4,5-tetrahydrodipicolinate + NAD(+) + H2O = (2S,4S)-4-hydroxy-2,3,4,5-tetrahydrodipicolinate + NADH + H(+). The catalysed reaction is (S)-2,3,4,5-tetrahydrodipicolinate + NADP(+) + H2O = (2S,4S)-4-hydroxy-2,3,4,5-tetrahydrodipicolinate + NADPH + H(+). It functions in the pathway amino-acid biosynthesis; L-lysine biosynthesis via DAP pathway; (S)-tetrahydrodipicolinate from L-aspartate: step 4/4. Catalyzes the conversion of 4-hydroxy-tetrahydrodipicolinate (HTPA) to tetrahydrodipicolinate. The protein is 4-hydroxy-tetrahydrodipicolinate reductase of Salmonella typhimurium (strain LT2 / SGSC1412 / ATCC 700720).